The primary structure comprises 307 residues: Cytochrome c1 2, heme protein, mitochondrial (307 aa).

The transit peptide at 1-64 directs the protein to the mitochondrion; sequence MVGGGVIRQL…LLSFSTVASA (64 aa). Over 65–270 the chain is Mitochondrial intermembrane; the sequence is DEAEHGLECP…EPEMEERKLM (206 aa). The region spanning 90–197 is the Cytochrome c domain; sequence ASIRRGHQVY…NGQNYVFALL (108 aa). Heme c is bound by residues Cys103, Cys106, His107, and Met226. The chain crosses the membrane as a helical span at residues 271–288; that stretch reads GFKWIFLLSLALLQAAYY. Residues 289-307 are Mitochondrial matrix-facing; sequence RRLKWSVLKSRKLVLDVVN.

The protein belongs to the cytochrome c family. Component of the ubiquinol-cytochrome c oxidoreductase (cytochrome b-c1 complex, complex III, CIII), a multisubunit enzyme composed of 10 subunits. The complex is composed of 3 respiratory subunits cytochrome b (MT-CYB), cytochrome c1 (CYC1-1 or CYC1-2) and Rieske protein (UCR1-1 or UCR1-2), 2 core protein subunits MPPalpha1 (or MPPalpha2) and MPPB, and 5 low-molecular weight protein subunits QCR7-1 (or QCR7-2), UCRQ-1 (or UCRQ-2), QCR9, UCRY and probably QCR6-1 (or QCR6-2). The complex exists as an obligatory dimer and forms supercomplexes (SCs) in the inner mitochondrial membrane with NADH-ubiquinone oxidoreductase (complex I, CI), resulting in different assemblies (supercomplexes SCI(1)III(2) and SCI(2)III(4)). Post-translationally, binds 1 heme c group covalently per subunit.

Its subcellular location is the mitochondrion inner membrane. Its function is as follows. Component of the ubiquinol-cytochrome c oxidoreductase, a multisubunit transmembrane complex that is part of the mitochondrial electron transport chain which drives oxidative phosphorylation. The respiratory chain contains 3 multisubunit complexes succinate dehydrogenase (complex II, CII), ubiquinol-cytochrome c oxidoreductase (cytochrome b-c1 complex, complex III, CIII) and cytochrome c oxidase (complex IV, CIV), that cooperate to transfer electrons derived from NADH and succinate to molecular oxygen, creating an electrochemical gradient over the inner membrane that drives transmembrane transport and the ATP synthase. The cytochrome b-c1 complex catalyzes electron transfer from ubiquinol to cytochrome c, linking this redox reaction to translocation of protons across the mitochondrial inner membrane, with protons being carried across the membrane as hydrogens on the quinol. In the process called Q cycle, 2 protons are consumed from the matrix, 4 protons are released into the intermembrane space and 2 electrons are passed to cytochrome c. Cytochrome c1 is a catalytic core subunit containing a c-type heme. It transfers electrons from the [2Fe-2S] iron-sulfur cluster of the Rieske protein to cytochrome c. In Arabidopsis thaliana (Mouse-ear cress), this protein is Cytochrome c1 2, heme protein, mitochondrial (CYC1-2).